The chain runs to 80 residues: Sulfur carrier protein TusA (80 aa).

Cysteine 17 functions as the Cysteine persulfide intermediate in the catalytic mechanism.

The protein belongs to the sulfur carrier protein TusA family.

Its subcellular location is the cytoplasm. In terms of biological role, sulfur carrier protein which probably makes part of a sulfur-relay system. The chain is Sulfur carrier protein TusA from Pseudomonas putida (strain GB-1).